An 879-amino-acid chain; its full sequence is MSEQVGQREAVDSPQATGVKTPPEPCPLCRETGPPQPPSITEEGKTNEDIDFIWVACNKCDEWYHSACLFLGDEKWRGTIPKEIISTVETNFGDEGAWTNWVEWIGKWYCAPCLARSTSPSNPRPPRHPLVATMKRASIQPKDIDQAGKPLKRSASTSAPLLKSNIKRPRTSTKGQETASPEIDMKSEREQQAESTAGTPASDAPQGRPKRKTAQIDYRNLNNSIATPTHQWLELIADPEKYGRTILDANYPALPGKLLTRAWLESQPLPGQPSSISPDLLPTRFWGPDREPLIVRPENGGFSSLGGHLPSKDLTVQDVANLVGPDRMVDVIDVSSQHSSQWTLQKWAEYIQSSSGNTSVRNPKVYNVISLEISGTELAKKVKPPKIVREIDWVDNFWRFSAGAGGKDVKEKGRGNDSRESSEIRKEGSHLTEGDNAGGEIEEDLEGLKEKTNTPYPKVQLYCLMGMKGAWTDWHVDFAASSVYYTIHSGAKVKLSCFVSFFSPGSYHSQVFFFVKPTEQNLKAYAEWSGSYEKQQDTWLGDMVDEVRKVELHAGDTMIIPTGYIHAVYTPMDSIVFGGNFLHSYNVDTQLRLRQIEIDTKVPQRFRFPMFDRLCWYVADKYCSDLRHLRAYRPRATTTPKPPHFRVLQCLSYLANFLVSQTGILEDPEAEDKARKLVHDRIPGDIVKDPEGLAKELKWRVERELGALGLLGEEASGVEAEEFKSNGTANGSVKIKGKEVSRKRDRLSKVFDKKAISRTWDFHPPAWSENRQSPQIETTTVQLPRPSTSSSDAISGSGPGASPGASANGGANENEQAELTTMLVKQTRKRMRELDDGTVIEESQETTFVEKKTVWGPKLDKEKISQPQGKVEEDMDIDH.

Disordered regions lie at residues 1-45 (MSEQ…EEGK), 117-212 (STSP…PKRK), and 407-449 (KDVK…EGLK). The PHD-type zinc finger occupies 23 to 116 (PEPCPLCRET…KWYCAPCLAR (94 aa)). Composition is skewed to basic and acidic residues over residues 183–192 (IDMKSEREQQ) and 407–433 (KDVK…HLTE). Positions 416 to 598 (NDSRESSEIR…TQLRLRQIEI (183 aa)) constitute a JmjC domain. Residue Thr472 participates in substrate binding. 2 residues coordinate Fe cation: His475 and Asp477. Lys492 contributes to the substrate binding site. A Fe cation-binding site is contributed by His566. The disordered stretch occupies residues 763–879 (HPPAWSENRQ…KVEEDMDIDH (117 aa)). The span at 769-782 (ENRQSPQIETTTVQ) shows a compositional bias: polar residues. The span at 786–818 (PSTSSSDAISGSGPGASPGASANGGANENEQAE) shows a compositional bias: low complexity. Positions 848-864 (FVEKKTVWGPKLDKEKI) are enriched in basic and acidic residues.

This sequence belongs to the JHDM1 histone demethylase family. Fe(2+) serves as cofactor.

The protein localises to the nucleus. The enzyme catalyses N(6),N(6)-dimethyl-L-lysyl(36)-[histone H3] + 2 2-oxoglutarate + 2 O2 = L-lysyl(36)-[histone H3] + 2 formaldehyde + 2 succinate + 2 CO2. Its function is as follows. Histone demethylase that specifically demethylates 'Lys-36' of histone H3, thereby playing a central role in histone code. This is JmjC domain-containing histone demethylation protein 1 (JHD1) from Cryptococcus neoformans var. neoformans serotype D (strain B-3501A) (Filobasidiella neoformans).